The primary structure comprises 2789 residues: Testis-expressed protein 15 (2789 aa).

The span at 34–46 (HNNTGSSTVTTSK) shows a compositional bias: polar residues. Disordered regions lie at residues 34-99 (HNNT…SSEV), 169-191 (ENQN…AYTK), 1063-1166 (FSSK…EHQP), 2303-2331 (KNIS…DTTV), and 2351-2379 (KATF…DSLK). Residues 47 to 59 (SIKDPRLMRREES) are compositionally biased toward basic and acidic residues. Positions 80–98 (DNVNSEIKSTPSNSASSSE) are enriched in polar residues. The span at 170 to 179 (NQNHSEEKAQ) shows a compositional bias: basic and acidic residues. The span at 1063–1077 (FSSKRKYDKRRKKRA) shows a compositional bias: basic residues. Low complexity-rich tracts occupy residues 1106-1116 (RKSMASSVSKS) and 1134-1160 (SQLP…NPSL).

The protein belongs to the TEX15 family. In terms of assembly, interacts with PIWIL4 and PIWIL2. Expressed in testis, predominantly in germ cells. Low expression, if any, in ovary. Also expressed in several cancers.

The protein localises to the cytoplasm. It localises to the nucleus. Functionally, required during spermatogenesis for normal chromosome synapsis and meiotic recombination in germ cells. Necessary for formation of DMC1 and RAD51 foci on meiotic chromosomes, suggesting a specific role in DNA double-stranded break repair. Essential executor of PIWIL4-piRNA pathway directed transposon DNA methylation and silencing in the male embryonic germ cells. PIWIL4-piRNA binds to nascent transposon transcripts and interacts with TEX15, which may in turn recruit the epigenetic silencing machinery to the transposon loci. Not required for piRNA biosynthesis. The polypeptide is Testis-expressed protein 15 (TEX15) (Homo sapiens (Human)).